Consider the following 349-residue polypeptide: DNA replication and repair protein RecF (349 aa).

Gly30–Thr37 provides a ligand contact to ATP.

It belongs to the RecF family.

It is found in the cytoplasm. The RecF protein is involved in DNA metabolism; it is required for DNA replication and normal SOS inducibility. RecF binds preferentially to single-stranded, linear DNA. It also seems to bind ATP. The polypeptide is DNA replication and repair protein RecF (Francisella tularensis subsp. tularensis (strain FSC 198)).